We begin with the raw amino-acid sequence, 160 residues long: Myosin catalytic light chain LC-1, mantle muscle (160 aa).

Residue 1 is subject to Blocked amino end (Xaa). 3 consecutive EF-hand domains span residues 7-44, 83-118, and 119-153; these read DEIE…LGMN, TAAD…LGER, and ITED…VMAG.

In molluscan muscle, calcium regulation is associated with myosin rather than with actin. Muscle myosin contains two types of light chains: the catalytic light chain, essential for ATPase activity, and the regulatory light chain, a calcium-binding protein responsible for Ca(2+) dependent binding and Ca(2+) dependent Mg-ATPase activity. In Todarodes pacificus (Japanese flying squid), this protein is Myosin catalytic light chain LC-1, mantle muscle.